Here is a 227-residue protein sequence, read N- to C-terminus: PKHD-type hydroxylase Bpro_3048 (227 aa).

In terms of domain architecture, Fe2OG dioxygenase spans 78–179 (KIFTPRINRY…RLACFFWVES (102 aa)). Fe cation is bound by residues histidine 97, aspartate 99, and histidine 160. Arginine 170 is a binding site for 2-oxoglutarate.

Requires Fe(2+) as cofactor. The cofactor is L-ascorbate.

This Polaromonas sp. (strain JS666 / ATCC BAA-500) protein is PKHD-type hydroxylase Bpro_3048.